The chain runs to 383 residues: Lipid-A-disaccharide synthase (383 aa).

This sequence belongs to the LpxB family.

The catalysed reaction is a lipid X + a UDP-2-N,3-O-bis[(3R)-3-hydroxyacyl]-alpha-D-glucosamine = a lipid A disaccharide + UDP + H(+). The protein operates within bacterial outer membrane biogenesis; LPS lipid A biosynthesis. Its function is as follows. Condensation of UDP-2,3-diacylglucosamine and 2,3-diacylglucosamine-1-phosphate to form lipid A disaccharide, a precursor of lipid A, a phosphorylated glycolipid that anchors the lipopolysaccharide to the outer membrane of the cell. The chain is Lipid-A-disaccharide synthase from Anaeromyxobacter sp. (strain K).